The chain runs to 124 residues: Small ribosomal subunit protein uS12 (124 aa).

Asp89 carries the post-translational modification 3-methylthioaspartic acid.

Belongs to the universal ribosomal protein uS12 family. Part of the 30S ribosomal subunit. Contacts proteins S8 and S17. May interact with IF1 in the 30S initiation complex.

In terms of biological role, with S4 and S5 plays an important role in translational accuracy. Interacts with and stabilizes bases of the 16S rRNA that are involved in tRNA selection in the A site and with the mRNA backbone. Located at the interface of the 30S and 50S subunits, it traverses the body of the 30S subunit contacting proteins on the other side and probably holding the rRNA structure together. The combined cluster of proteins S8, S12 and S17 appears to hold together the shoulder and platform of the 30S subunit. This Vibrio vulnificus (strain CMCP6) protein is Small ribosomal subunit protein uS12.